Reading from the N-terminus, the 319-residue chain is MHKLNENDVTPEHIFFERRKIIQSMGLMGAASLLPRFSLAAEKQDSRQALHFAKDHNPQNLLLTPENKVIGYNNFYEFGVDKASPAKYASALKTEPWTLRIEGEVEKPMTFDVHQLMQQLPLEERIYRFRCVEAWSMVIPWIGFELNKLLALVQPTSQAKYVEFETLYEPDSMPGQKNHFFGGGLIYPYVEGLTMAEAMHPLTLLSVGLYGKTLAPQNGAPIRLVVPWKYGFKNIKSIVKITLKSEQPMTTWHHAAPHEYGFYANVNPEVDHPRWSQASERVIGSGGLLSVKRQPTLLFNGYAEQVAHLYQDLDLRTYF.

The segment at residues 1 to 40 (MHKLNENDVTPEHIFFERRKIIQSMGLMGAASLLPRFSLA) is a signal peptide (tat-type signal). Residues Asn73, 76–77 (YE), Cys131, Thr166, Asn218, Arg223, and 234–236 (NIK) each bind Mo-molybdopterin.

The protein belongs to the MsrP family. In terms of assembly, heterodimer of a catalytic subunit (MsrP) and a heme-binding subunit (MsrQ). Mo-molybdopterin is required as a cofactor. Post-translationally, predicted to be exported by the Tat system. The position of the signal peptide cleavage has not been experimentally proven.

It localises to the periplasm. It catalyses the reaction L-methionyl-[protein] + a quinone + H2O = L-methionyl-(S)-S-oxide-[protein] + a quinol. It carries out the reaction L-methionyl-[protein] + a quinone + H2O = L-methionyl-(R)-S-oxide-[protein] + a quinol. Its function is as follows. Part of the MsrPQ system that repairs oxidized periplasmic proteins containing methionine sulfoxide residues (Met-O), using respiratory chain electrons. Thus protects these proteins from oxidative-stress damage caused by reactive species of oxygen and chlorine generated by the host defense mechanisms. MsrPQ is essential for the maintenance of envelope integrity under bleach stress, rescuing a wide series of structurally unrelated periplasmic proteins from methionine oxidation. The catalytic subunit MsrP is non-stereospecific, being able to reduce both (R-) and (S-) diastereoisomers of methionine sulfoxide. The protein is Protein-methionine-sulfoxide reductase catalytic subunit MsrP of Pasteurella multocida (strain Pm70).